A 567-amino-acid polypeptide reads, in one-letter code: MSTSVFNRRWAALLLEALTRHGVRHICIAPGSRSTPLTLAAAANPSLVCHTHFDERGLGHLALGLAKASTEPVAVIVTSGTAVANLYPALIEAGLTGERLILLTADRPPELIDCGANQAIRQQGLFASHPTLSVNLPRPTPDISARWLVSTLDSAMAQLQHGALHINCPFAEPLYGGDEQQYADWSASLGDWWQDCHPWLRQTCYPPSLYQPLAQQADWFFWRQKRGVVIAGRMGAEEGRQLTAWAAMLGWPLIGDVLSQTGQPLPCADLWLAHPRAQETLAQAQIVLQFGSSLTSKRLLQWQTACQPQEYWLVDSAPGRLDPANHRGRRIICPVGEWLSRHPAQRRTPWATELAAYSESAQAQVIETLSGQFSEAAVAHQLAELLPDNGQLFVGNSLIVRLIDALGQLPAGYPVYSNRGASGIDGLLSTAAGVQRATAKPTLAIVGDLSALYDLNALALLRQSSAPMVLLVINNNGGQIFSLLPTPEAERQRFYCMPQDVNFEHAAVMFSLGYARPNSWPQLREHVHQCWLRGGTTLIEVQVPPSQGAETLQQLVQQVTLIPQVAP.

Belongs to the TPP enzyme family. MenD subfamily. Homodimer. Mg(2+) serves as cofactor. Requires Mn(2+) as cofactor. Thiamine diphosphate is required as a cofactor.

The enzyme catalyses isochorismate + 2-oxoglutarate + H(+) = 5-enolpyruvoyl-6-hydroxy-2-succinyl-cyclohex-3-ene-1-carboxylate + CO2. It participates in quinol/quinone metabolism; 1,4-dihydroxy-2-naphthoate biosynthesis; 1,4-dihydroxy-2-naphthoate from chorismate: step 2/7. It functions in the pathway quinol/quinone metabolism; menaquinone biosynthesis. In terms of biological role, catalyzes the thiamine diphosphate-dependent decarboxylation of 2-oxoglutarate and the subsequent addition of the resulting succinic semialdehyde-thiamine pyrophosphate anion to isochorismate to yield 2-succinyl-5-enolpyruvyl-6-hydroxy-3-cyclohexene-1-carboxylate (SEPHCHC). The polypeptide is 2-succinyl-5-enolpyruvyl-6-hydroxy-3-cyclohexene-1-carboxylate synthase (Yersinia pseudotuberculosis serotype IB (strain PB1/+)).